The chain runs to 147 residues: Large ribosomal subunit protein uL15 (147 aa).

The segment at 1–54 (MRLSDIKPTPGSMKKRTRVGRGIGSGKGKTSGKGHKGQKARGRGKVHPWFEGGQ) is disordered. Positions 30-46 (TSGKGHKGQKARGRGKV) are enriched in basic residues.

It belongs to the universal ribosomal protein uL15 family. As to quaternary structure, part of the 50S ribosomal subunit.

Binds to the 23S rRNA. In Thermosipho melanesiensis (strain DSM 12029 / CIP 104789 / BI429), this protein is Large ribosomal subunit protein uL15.